A 413-amino-acid chain; its full sequence is Probable elongation factor 1-gamma 2 (413 aa).

The region spanning 1-82 is the GST N-terminal domain; it reads MALVMHTYKG…YVSRKNGDNS (82 aa). In terms of domain architecture, GST C-terminal spans 87–215; it reads SLIEYAHIEQ…AKQTEAVPPV (129 aa). Residues 207–260 are disordered; it reads KQTEAVPPVPTKKAPQPAKPKEEPKKAAPVAEAPKPAEEEEAPKPKAKNPLDLL. One can recognise an EF-1-gamma C-terminal domain in the interval 253 to 413; the sequence is AKNPLDLLPP…EALLDAKCFK (161 aa).

EF-1 is composed of four subunits: alpha, beta, delta, and gamma.

In terms of biological role, probably plays a role in anchoring the complex to other cellular components. In Arabidopsis thaliana (Mouse-ear cress), this protein is Probable elongation factor 1-gamma 2.